Consider the following 859-residue polypeptide: Protein EFR3 homolog (859 aa).

Disordered regions lie at residues 638-657 (DDPLSSTAVNGTIPEGTPRT) and 697-724 (RDGNGDSWQREDGQNFDSTDGRESPDGY). The span at 704-722 (WQREDGQNFDSTDGRESPD) shows a compositional bias: basic and acidic residues.

Belongs to the EFR3 family.

The chain is Protein EFR3 homolog from Caenorhabditis briggsae.